Reading from the N-terminus, the 134-residue chain is Large ribosomal subunit protein uL14 (134 aa).

The protein belongs to the universal ribosomal protein uL14 family. Part of the 50S ribosomal subunit. Forms a cluster with proteins L3 and L19. In the 70S ribosome, L14 and L19 interact and together make contacts with the 16S rRNA in bridges B5 and B8.

In terms of biological role, binds to 23S rRNA. Forms part of two intersubunit bridges in the 70S ribosome. In Deinococcus deserti (strain DSM 17065 / CIP 109153 / LMG 22923 / VCD115), this protein is Large ribosomal subunit protein uL14.